A 118-amino-acid chain; its full sequence is Putative pterin-4-alpha-carbinolamine dehydratase (118 aa).

The protein belongs to the pterin-4-alpha-carbinolamine dehydratase family.

It carries out the reaction (4aS,6R)-4a-hydroxy-L-erythro-5,6,7,8-tetrahydrobiopterin = (6R)-L-erythro-6,7-dihydrobiopterin + H2O. The protein is Putative pterin-4-alpha-carbinolamine dehydratase of Xanthomonas campestris pv. campestris (strain B100).